The following is a 333-amino-acid chain: Nucleoid-associated protein (333 aa).

Belongs to the YejK family.

It is found in the cytoplasm. Its subcellular location is the nucleoid. The protein is Nucleoid-associated protein of Metapseudomonas resinovorans (Pseudomonas resinovorans).